The primary structure comprises 605 residues: DNA primase (605 aa).

Residues 38–62 (CPFHDEKTPSFTVSEDKQICHCFGC) form a CHC2-type zinc finger. The Toprim domain maps to 260–341 (DEIVLLEGFM…NVFVIQLPSG (82 aa)). Glu266, Asp310, and Asp312 together coordinate Mg(2+).

This sequence belongs to the DnaG primase family. In terms of assembly, monomer. Interacts with DnaB. Zn(2+) serves as cofactor. The cofactor is Mg(2+).

It catalyses the reaction ssDNA + n NTP = ssDNA/pppN(pN)n-1 hybrid + (n-1) diphosphate.. Its function is as follows. RNA polymerase that catalyzes the synthesis of short RNA molecules used as primers for DNA polymerase during DNA replication. The chain is DNA primase from Staphylococcus aureus.